Here is a 579-residue protein sequence, read N- to C-terminus: Mitogen-activated protein kinase kinase kinase 7 (579 aa).

The tract at residues 1 to 300 (MSTASAASSS…FPGADEPLQY (300 aa)) is interaction with MAPK8IP1. A Protein kinase domain is found at 36–291 (IEVEEVVGRG…KIMTHLMRYF (256 aa)). Residues 42–50 (VGRGAFGVV) and lysine 63 contribute to the ATP site. Lysine 72 is covalently cross-linked (Glycyl lysine isopeptide (Lys-Gly) (interchain with G-Cter in ubiquitin)). The active-site Proton acceptor is aspartate 156. Lysine 158 is covalently cross-linked (Glycyl lysine isopeptide (Lys-Gly) (interchain with G-Cter in ubiquitin)). Residues threonine 184 and threonine 187 each carry the phosphothreonine; by autocatalysis modification. A Phosphoserine; by autocatalysis modification is found at serine 192. Residue lysine 209 forms a Glycyl lysine isopeptide (Lys-Gly) (interchain with G-Cter in ubiquitin) linkage. Disordered stretches follow at residues 301-338 (PCQYSDEGQSNSATSTGSFMDIASTNTSNKSDTNMEQV) and 354-391 (KNQAKQQSESGRLSLGASRGSSVESLPPTSEGKRMSAD). Residues 306–338 (DEGQSNSATSTGSFMDIASTNTSNKSDTNMEQV) show a composition bias toward polar residues. The span at 361 to 375 (SESGRLSLGASRGSS) shows a compositional bias: low complexity. Serine 367, serine 389, and serine 412 each carry phosphoserine. Residues 416 to 425 (LTVTGTEPGQ) show a composition bias toward polar residues. The interval 416-466 (LTVTGTEPGQVSSRSSSPSVRMITTSGPTSEKPARSHPWTPDDSTDTNGSD) is disordered. Low complexity predominate over residues 426–436 (VSSRSSSPSVR). Position 428 is a phosphoserine (serine 428).

The protein belongs to the protein kinase superfamily. STE Ser/Thr protein kinase family. MAP kinase kinase kinase subfamily. Can form homodimer. Binds both upstream activators and downstream substrates in multimolecular complexes. Interacts with TAB1/MAP3K7IP1, TAB2/MAP3K7IP2 and TAB3/MAP3K7IP3. Identified in the TRIKA2 complex composed of MAP3K7/TAK1, TAB1/MAP3K7IP1 and TAB2/MAP3K7IP2. Interacts with PPM1L and PPM1B/PP2CB. Interaction with PP2A and PPP6C leads to its repressed activity. Interacts with TRAF6 and TAB1/MAP3K7IP1; during IL-1 signaling. Interacts with TAOK1 and TAOK2; interaction with TAOK2 interferes with MAP3K7 interaction with IKKA, thus preventing NF-kappa-B activation. Interacts with DYNC2I2 (via WD domains). Interacts with CYLD and RBCK1. Interacts with TGFBR1; induces MAP3K7/TAK1 activation by TRAF6. Interacts with MAPK8IP1 and SMAD6. Interacts with isoform 1 of VRK2. Interacts with DAB2; the interaction is induced by TGF-beta stimulation and may mediate TGF-beta stimulated JNK activation. Interacts with TRIM5. Part of a complex containing ITCH, NDFIP1 and MAP3K7. Interacts with PLEKHM1 (via N- and C-terminus). Interacts with TRIM8. Found in a complex with SH3RF1, RAC2, MAP2K7/MKK7, MAPK8IP1/JIP1, MAPK8/JNK1 and MAPK9/JNK2. Interacts with SASH1. Interacts with RIPK1. Mg(2+) is required as a cofactor. In terms of processing, association with TAB1/MAP3K7IP1 promotes autophosphorylation and subsequent activation. Association with TAB2/MAP3K7IP2, itself associated with free unanchored Lys-63 polyubiquitin chain, promotes autophosphorylation and subsequent activation of MAP3K7. Dephosphorylation at Thr-187 by PP2A and PPP6C leads to inactivation. Post-translationally, 'Lys-48'-linked polyubiquitination at Lys-72 is induced by TNFalpha, and leads to proteasomal degradation. Undergoes 'Lys-48'-linked polyubiquitination catalyzed by ITCH. 'Lys-63'-linked polyubiquitination at Lys-158 by TRIM8 does not lead to proteasomal degradation but contributes to autophosphorylation and activation. Deubiquitinated by CYLD, a protease that selectively cleaves 'Lys-63'-linked ubiquitin chains.Deubiquitinated by USP19; leading to negative regulation of TNF-alpha- and IL-1beta-triggered NF-kappa-B activation.

The protein resides in the cytoplasm. The protein localises to the cell membrane. The enzyme catalyses L-seryl-[protein] + ATP = O-phospho-L-seryl-[protein] + ADP + H(+). It catalyses the reaction L-threonyl-[protein] + ATP = O-phospho-L-threonyl-[protein] + ADP + H(+). Activated by pro-inflammatory cytokines and in response to physical and chemical stresses, including osmotic stress, oxidative stress, arsenic and ultraviolet light irradiation. Activated by 'Lys-63'-linked polyubiquitination and by autophosphorylation. Association with TAB1/MAP3K7IP1 and TAB2/MAP3K7IP2 promotes activation through autophosphorylation, whereas PPM1B/PP2CB, PP2A and PPP6C dephosphorylation leads to inactivation. Ceramides are also able to activate MAP3K7/TAK1. Functionally, serine/threonine kinase which acts as an essential component of the MAP kinase signal transduction pathway. Plays an important role in the cascades of cellular responses evoked by changes in the environment. Mediates signal transduction of TRAF6, various cytokines including interleukin-1 (IL-1), transforming growth factor-beta (TGFB), TGFB-related factors like BMP2 and BMP4, toll-like receptors (TLR), tumor necrosis factor receptor CD40 and B-cell receptor (BCR). Once activated, acts as an upstream activator of the MKK/JNK signal transduction cascade and the p38 MAPK signal transduction cascade through the phosphorylation and activation of several MAP kinase kinases like MAP2K1/MEK1, MAP2K3/MKK3, MAP2K6/MKK6 and MAP2K7/MKK7. These MAP2Ks in turn activate p38 MAPKs and c-jun N-terminal kinases (JNKs); both p38 MAPK and JNK pathways control the transcription factors activator protein-1 (AP-1). Independently of MAP2Ks and p38 MAPKs, acts as a key activator of NF-kappa-B by promoting activation of the I-kappa-B-kinase (IKK) core complex. Mechanistically, recruited to polyubiquitin chains of RIPK2 and IKBKG/NEMO via TAB2/MAP3K7IP2 and TAB3/MAP3K7IP3, and catalyzes phosphorylation and activation of IKBKB/IKKB component of the IKK complex, leading to NF-kappa-B activation. In osmotic stress signaling, plays a major role in the activation of MAPK8/JNK1, but not that of NF-kappa-B. Promotes TRIM5 capsid-specific restriction activity. Phosphorylates RIPK1 at 'Ser-321' which positively regulates RIPK1 interaction with RIPK3 to promote necroptosis but negatively regulates RIPK1 kinase activity and its interaction with FADD to mediate apoptosis. Phosphorylates STING1 in response to cGAMP-activation, promoting association between STEEP1 and STING1 and STING1 translocation to COPII vesicles. The polypeptide is Mitogen-activated protein kinase kinase kinase 7 (Map3k7) (Mus musculus (Mouse)).